The primary structure comprises 257 residues: Type III pantothenate kinase (257 aa).

ATP is bound at residue 7 to 14 (DIGNSHTV). 106-109 (GTDR) lines the substrate pocket. The active-site Proton acceptor is Asp108. Asp128 is a K(+) binding site. Thr132 contacts ATP. Thr184 is a binding site for substrate.

The protein belongs to the type III pantothenate kinase family. As to quaternary structure, homodimer. NH4(+) is required as a cofactor. The cofactor is K(+).

The protein localises to the cytoplasm. The catalysed reaction is (R)-pantothenate + ATP = (R)-4'-phosphopantothenate + ADP + H(+). Its pathway is cofactor biosynthesis; coenzyme A biosynthesis; CoA from (R)-pantothenate: step 1/5. Its function is as follows. Catalyzes the phosphorylation of pantothenate (Pan), the first step in CoA biosynthesis. This is Type III pantothenate kinase from Nocardioides sp. (strain ATCC BAA-499 / JS614).